The following is a 3008-amino-acid chain: Genome polyprotein (3008 aa).

Ser2 carries the N-acetylserine; by host modification. Residues 2 to 23 are interaction with STAT1; sequence STNPKPQRKTKRNTNRRPMDVK. The interaction with EIF2AK2/PKR stretch occupies residues 2–58; it reads STNPKPQRKTKRNTNRRPMDVKFPGGGQIVGGVYLLPRRGPRLGVRATRKTSERSQP. The tract at residues 2 to 59 is interaction with DDX3X; that stretch reads STNPKPQRKTKRNTNRRPMDVKFPGGGQIVGGVYLLPRRGPRLGVRATRKTSERSQPR. Positions 2 to 75 are disordered; that stretch reads STNPKPQRKT…PKARRPEGRS (74 aa). Residues 2–168 lie on the Cytoplasmic side of the membrane; it reads STNPKPQRKT…EDGINYATGN (167 aa). 2 consecutive short sequence motifs (nuclear localization signal) follow at residues 5 to 13 and 38 to 43; these read PKPQRKTKR and PRRGPR. Over residues 7 to 16 the composition is skewed to basic residues; that stretch reads PQRKTKRNTN. Low complexity predominate over residues 32–47; that stretch reads GGVYLLPRRGPRLGVR. Ser53 carries the phosphoserine; by host modification. 2 short sequence motifs (nuclear localization signal) span residues 58–64 and 66–71; these read PRGRRQP and PKARRP. Residues 58-68 show a composition bias toward basic residues; it reads PRGRRQPIPKA. A phosphoserine; by host mark is found at Ser99 and Ser116. The segment at 112–152 is important for endoplasmic reticulum and mitochondrial localization; sequence PRGRSRNLGKVIDTLTCGFADLMGYIPLVGAPVGSVARALA. Positions 122 to 173 are interaction with APOA2; that stretch reads VIDTLTCGFADLMGYIPLVGAPVGSVARALAHGVRALEDGINYATGNLPGCS. Residues 164 to 167 form an important for lipid droplets localization region; sequence YATG. Residues 169–189 traverse the membrane as a helical segment; it reads LPGCSFSIFLLALLSCLTVPA. Residues 178–191 constitute a propeptide, ER anchor for the core protein, removed in mature form by host signal peptidase; sequence LLALLSCLTVPASA. The Lumenal portion of the chain corresponds to 190–358; that stretch reads SAVNYRNVSG…SGGHWGVLVG (169 aa). 3 N-linked (GlcNAc...) asparagine; by host glycosylation sites follow: Asn196, Asn209, and Asn234. Positions 265 to 296 are important for fusion; sequence MVGAATVCSGLYIGDLCGGLFLVGQMFSFRPR. An N-linked (GlcNAc...) asparagine; by host glycan is attached at Asn305. Residues 359 to 379 form a helical membrane-spanning segment; the sequence is VAYFSMQANWAKVILVLFLFA. Topologically, residues 380–725 are lumenal; the sequence is GVDAETHVSG…WEYVVLAFLL (346 aa). Residues 385–412 are HVR1; the sequence is THVSGAAVGRSTAGLANLFSSGSKQNLQ. Residues Asn417, Asn423, and Asn430 are each glycosylated (N-linked (GlcNAc...) (high mannose) asparagine; by host). Disulfide bonds link Cys429-Cys553, Cys452-Cys459, Cys487-Cys495, and Cys504-Cys509. Asn448 is a glycosylation site (N-linked (GlcNAc...) asparagine; by host). The segment at 475 to 479 is HVR2; the sequence is ANISG. Asn476 is a glycosylation site (N-linked (GlcNAc...) asparagine; by host). Residues 481 to 494 are CD81-binding 1; the sequence is SDDRPYCWHYAPRP. An N-linked (GlcNAc...) asparagine; by host glycan is attached at Asn533. The segment at 545-552 is CD81-binding 2; sequence PPHGAWFG. The N-linked (GlcNAc...) asparagine; by host glycan is linked to Asn557. Intrachain disulfides connect Cys565-Cys570, Cys581-Cys585, Cys597-Cys620, and Cys607-Cys644. Asn623 and Asn645 each carry an N-linked (GlcNAc...) (high mannose) asparagine; by host glycan. Cys652 and Cys677 are oxidised to a cystine. Residues 660 to 671 are PKR/eIF2-alpha phosphorylation homology domain (PePHD); the sequence is VELSPLLLTTTA. A helical membrane pass occupies residues 726–746; the sequence is LADARVSAYLWMMFMVSQVEA. Over 747–757 the chain is Lumenal; sequence ALSNLININAA. Residues 758–778 traverse the membrane as a helical segment; the sequence is SAAGAQGFWYAILFICIVWHV. Over 779–782 the chain is Cytoplasmic; that stretch reads KGRF. Residues 783–803 traverse the membrane as a helical segment; the sequence is PAAAAYAACGLWPCFLLLLML. Residues 804-813 are Lumenal-facing; it reads PERAYAYDQE. The chain crosses the membrane as a helical span at residues 814 to 834; it reads VAGSLGGAIVVMLTILTLSPH. Topologically, residues 835-881 are cytoplasmic; it reads YKLWLARGLWWIQYFIARTEAVLHVYIPSFNVRGPRDSVIVLAVLVC. The chain crosses the membrane as a helical span at residues 882–902; that stretch reads PDLVFDITKYLLAILGPLHIL. Over 903–928 the chain is Lumenal; it reads QASLLRIPYFVRAQALVKICSLLRGV. Positions 903–1026 constitute a Peptidase C18 domain; sequence QASLLRIPYF…TETSKGWRLL (124 aa). The protease NS2-3 stretch occupies residues 904 to 1206; it reads ASLLRIPYFV…PVESLETTMR (303 aa). Cys922 carries the S-palmitoyl cysteine; by host lipid modification. Residues 929–949 form a helical membrane-spanning segment; that stretch reads VYGKYFQMVVLKSRGLTGTYI. The tract at residues 929–949 is interaction with host SCPS1; the sequence is VYGKYFQMVVLKSRGLTGTYI. At 950–1657 the chain is on the cytoplasmic side; that stretch reads YDHLTPMSDW…CMSADLEVVT (708 aa). Residues His952, Glu972, and Cys993 each act as for protease NS2 activity; shared with dimeric partner in the active site. One can recognise a Peptidase S29 domain in the interval 1027-1208; that stretch reads APITAYAQQT…ESLETTMRSP (182 aa). Residues His1083 and Asp1107 each act as charge relay system; for serine protease NS3 activity in the active site. Zn(2+) contacts are provided by Cys1123 and Cys1125. The active-site Charge relay system; for serine protease NS3 activity is the Ser1165. Residues Cys1171 and His1175 each coordinate Zn(2+). Positions 1217–1369 constitute a Helicase ATP-binding domain; the sequence is PAVPQTYQVA…SNIEEVALPT (153 aa). 1230-1237 provides a ligand contact to ATP; that stretch reads APTGSGKS. The Mg(2+) site is built by Ser1237 and Glu1317. The DECH box motif lies at 1316 to 1319; it reads DECY. The tract at residues 1486–1498 is RNA-binding; that stretch reads QRRGRTGRGRLGT. The helical transmembrane segment at 1658–1678 threads the bilayer; it reads STWVLVGGVLAALAAYCLSVG. The segment at 1679-1690 is NS3-binding; the sequence is SVVIVGRVVLSG. The Cytoplasmic segment spans residues 1679 to 1805; that stretch reads SVVIVGRVVL…AVTSPLTTQQ (127 aa). Residues 1806–1826 traverse the membrane as a helical segment; it reads TLLFNILGGWVASQIRDSDAS. Residues 1827 to 1828 are Lumenal-facing; it reads TA. The helical transmembrane segment at 1829–1849 threads the bilayer; it reads FVVSGLAGAAVGSVGLGKILV. A topological domain (cytoplasmic) is located at residue Asp1850. A helical transmembrane segment spans residues 1851–1871; that stretch reads ILPGYGAGVRGAVVTFKIMSG. Residues 1872-1881 are Lumenal-facing; it reads EMPSTEDLVN. Residues 1882 to 1902 form a helical membrane-spanning segment; that stretch reads LLPAILSPGALVVEVVCPAIL. At 1903–1972 the chain is on the cytoplasmic side; sequence RRHVGPGEGA…WINEDCSTPC (70 aa). Cys1972 carries S-palmitoyl cysteine; by host lipidation. Residues 1973-2002 lie within the membrane without spanning it; that stretch reads AESWLWEVWDWVLHVLSDFKTCLKAKFVPL. At 2003-2987 the chain is on the cytoplasmic side; the sequence is MPGIPLLSWP…YHSMSHARPR (985 aa). 3 residues coordinate Zn(2+): Cys2029, Cys2031, and Cys2052. The interval 2120–2208 is FKBP8-binding; the sequence is ELFTEVDGIR…ASSSASQLSP (89 aa). A transcriptional activation region spans residues 2120–2329; sequence ELFTEVDGIR…PVPSPRRKRT (210 aa). Positions 2135–2139 are interaction with non-structural protein 4A; the sequence is PKCKP. Residues 2189-2435 form an interaction with host SKP2 region; sequence RLARGSRPSL…ALVTPCAAEE (247 aa). A phosphoserine; by host mark is found at Ser2194, Ser2197, Ser2201, Ser2204, and Ser2207. The ISDR stretch occupies residues 2210 to 2245; that stretch reads LLQATCTAPHDSPGTDLLEANLLWGSTATRVETDEK. The interval 2210–2272 is interaction with EIF2AK2/PKR; that stretch reads LLQATCTAPH…REVSVAAEIL (63 aa). The interval 2245 to 2303 is NS4B-binding; it reads KVIILDSFESCVAEQNDDREVSVAAEILRPTKKFPPALPIWARPDYNPPLTETWKQQDY. Residues 2296-2373 form a V3 region; that stretch reads ETWKQQDYQA…TPTETTDSGP (78 aa). The short motif at 2319–2322 is the SH3-binding element; it reads PPVP. Positions 2324–2332 match the Nuclear localization signal motif; that stretch reads PRRKRTVQL. Residues 2346-2406 are disordered; it reads AKTFGQSEPS…DPDLTSDSWS (61 aa). A Glycyl lysine isopeptide (Lys-Gly) (interchain with G-Cter in ubiquitin) cross-link involves residue Lys2347. At Ser2446 the chain carries Phosphoserine; by host. One can recognise a RdRp catalytic domain in the interval 2631–2749; it reads PMGFSYDTRC…IAESDGVEED (119 aa). Asp2637, Asp2735, and Asp2736 together coordinate Mg(2+). A helical transmembrane segment spans residues 2988 to 3008; that stretch reads YLLLCLLILTVGVGIFLLPAR.

It belongs to the hepacivirus polyprotein family. In terms of assembly, homooligomer. Interacts with E1 (via C-terminus). Interacts with the non-structural protein 5A. Interacts (via N-terminus) with host STAT1 (via SH2 domain); this interaction results in decreased STAT1 phosphorylation and ubiquitin-mediated proteasome-dependent STAT1 degradation, leading to decreased IFN-stimulated gene transcription. Interacts with host STAT3; this interaction constitutively activates STAT3. Interacts with host LTBR receptor. Interacts with host TNFRSF1A receptor and possibly induces apoptosis. Interacts with host HNRPK. Interacts with host YWHAE. Interacts with host UBE3A/E6AP. Interacts with host DDX3X. Interacts with host APOA2. Interacts with host RXRA protein. Interacts with host SP110 isoform 3/Sp110b; this interaction sequesters the transcriptional corepressor SP110 away from the nucleus. Interacts with host CREB3 nuclear transcription protein; this interaction triggers cell transformation. Interacts with host ACY3. Interacts with host C1QR1. Interacts with host RBM24; this interaction, which enhances the interaction of the mature core protein with 5'-UTR, may inhibit viral translation and favor replication. Interacts with host EIF2AK2/PKR; this interaction induces the autophosphorylation of EIF2AK2. Part of the viral assembly initiation complex composed of NS2, E1, E2, NS3, NS4A, NS5A and the mature core protein. Forms a heterodimer with envelope glycoprotein E2. Interacts with mature core protein. Interacts with protease NS2. The heterodimer E1/E2 interacts with host CLDN1; this interaction plays a role in viral entry into host cell. Interacts with host SPSB2 (via C-terminus). Part of the viral assembly initiation complex composed of NS2, E1, E2, NS3, NS4A, NS5A and the mature core protein. Interacts with host NEURL3; this interaction prevents E1 binding to glycoprotein E2. As to quaternary structure, forms a heterodimer with envelope glycoprotein E1. Interacts with host CD81 and SCARB1 receptors; these interactions play a role in viral entry into host cell. Interacts with host EIF2AK2/PKR; this interaction inhibits EIF2AK2 and probably allows the virus to evade the innate immune response. Interacts with host CD209/DC-SIGN and CLEC4M/DC-SIGNR. Interact with host SPCS1; this interaction is essential for viral particle assembly. Interacts with protease NS2. The heterodimer E1/E2 interacts with host CLDN1; this interaction plays a role in viral entry into host cell. Part of the viral assembly initiation complex composed of NS2, E1, E2, NS3, NS4A, NS5A and the mature core protein. Interacts with host SLC3A2/4F2hc; the interaction may facilitate viral entry into host cell. Interacts with human PLSCR1. In terms of assembly, homohexamer. Homoheptamer. Interacts with protease NS2. Homodimer. Interacts with host SPCS1; this interaction is essential for viral particle assembly. Interacts with envelope glycoprotein E1. Interacts with envelope glycoprotein E2. Interacts with viroporin p7. Interacts with serine protease/helicase NS3. Part of the replication complex composed of NS2, NS3, NS4A, NS4B, NS5A and the RNA-directed RNA polymerase embedded in an ER-derived membranous web. Part of the viral assembly initiation complex composed of NS2, E1, E2, NS3, NS4A, NS5A and the mature core protein. As to quaternary structure, interacts with protease NS2. Interacts with non-structural protein 4A; this interaction stabilizes the folding of NS3 serine protease. NS3-NS4A interaction is essential for NS3 activation and allows membrane anchorage of the latter. NS3/NS4A complex also prevents phosphorylation of host IRF3, thus preventing the establishment of dsRNA induced antiviral state. Interacts with host MAVS; this interaction leads to the cleavage and inhibition of host MAVS. Interacts with host TICAM1; this interaction leads to the cleavage and inhibition of host TICAM1. Interacts with host TANK-binding kinase/TBK1; this interaction results in the inhibition of the association between TBK1 and IRF3, which leads to the inhibition of IRF3 activation. Interacts with host RBM24. Part of the replication complex composed of NS2, NS3, NS4A, NS4B, NS5A and the RNA-directed RNA polymerase embedded in an ER-derived membranous web. Part of the viral assembly initiation complex composed of NS2, E1, E2, NS3, NS4A, NS5A and the mature core protein. In terms of assembly, interacts with NS3 serine protease; this interaction stabilizes the folding of NS3 serine protease. NS3-NS4A interaction is essential for NS3 activation and allows membrane anchorage of the latter. Interacts with non-structural protein 5A (via N-terminus). Part of the replication complex composed of NS2, NS3, NS4A, NS4B, NS5A and the RNA-directed RNA polymerase embedded in an ER-derived membranous web. Part of the viral assembly initiation complex composed of NS2, E1, E2, NS3, NS4A, NS5A and the mature core protein. Homomultimer. Interacts with non-structural protein NS5A. Interacts with host PLA2G4C; this interaction likely initiates the recruitment of replication complexes to lipid droplets. Interacts with host STING; this interaction disrupts the interaction between STING and TBK1 thereby suppressing the interferon signaling. Part of the replication complex composed of NS2, NS3, NS4A, NS4B, NS5A and the RNA-directed RNA polymerase embedded in an ER-derived membranous web. As to quaternary structure, monomer. Homodimer; dimerization is required for RNA-binding. Interacts with the mature core protein. Interacts (via N-terminus) with non-structural protein 4A. Interacts with non-structural protein 4B. Interacts (via region D2) with RNA-directed RNA polymerase. Part of the viral assembly initiation complex composed of NS2, E1, E2, NS3, NS4A, NS5A and the mature core protein. Part of the replication complex composed of NS2, NS3, NS4A, NS4B, NS5A and the RNA-directed RNA polymerase embedded in an ER-derived membranous web. Interacts with host GRB2. Interacts with host BIN1. Interacts with host PIK3R1. Interacts with host SRCAP. Interacts with host FKBP8. Interacts (via C-terminus) with host VAPB (via MSP domain). Interacts with host EIF2AK2/PKR; this interaction leads to disruption of EIF2AK2 dimerization by NS5A and probably allows the virus to evade the innate immune response. Interacts (via N-terminus) with host PACSIN2 (via N-terminus); this interaction attenuates protein kinase C alpha-mediated phosphorylation of PACSIN2 by disrupting the interaction between PACSIN2 and PRKCA. Interacts (via N-terminus) with host SRC kinase (via SH2 domain). Interacts with most Src-family kinases. Interacts with host IFI27 and SKP2; promotes the ubiquitin-mediated proteasomal degradation of NS5A. Interacts with host GPS2. Interacts with host TNFRSF21; this interaction allows the modulation by the virus of JNK, p38 MAPK, STAT3, and Akt signaling pathways in a DR6-dependent manner. Interacts (via N-terminus) with host CIDEB (via N-terminus); this interaction seems to regulate the association of HCV particles with APOE. Interacts with host CHKA/Choline Kinase-alpha; CHKA bridges host PI4KA and NS5A and potentiates NS5A-stimulated PI4KA activity, which then facilitates the targeting of the ternary complex to the ER for viral replication. Interacts with host SPSB2 (via C-terminus); this interaction targets NS5A for ubiquitination and degradation. Interacts with host RAB18; this interaction may promote the association of NS5A and other replicase components with lipid droplets. Interacts (via region D2) with host PPIA/CYPA; the interaction stimulates RNA-binding ability of NS5A and is dependent on the peptidyl-prolyl cis-trans isomerase activity of PPIA/CYPA. Interacts with host TRIM14; this interaction induces the degradation of NS5A. In terms of assembly, homooligomer. Interacts with non-structural protein 5A. Interacts with host VAPB. Interacts with host PRK2/PKN2. Interacts with host HNRNPA1 and SEPT6; these interactions facilitate viral replication. Part of the replication complex composed of NS2, NS3, NS4A, NS4B, NS5A and the RNA-directed RNA polymerase. The cofactor is Zn(2+). Mg(2+) is required as a cofactor. In terms of processing, specific enzymatic cleavages in vivo yield mature proteins. The structural proteins, core, E1, E2 and p7 are produced by proteolytic processing by host signal peptidases. The core protein precursor is synthesized as a 23 kDa, which is retained in the ER membrane through the hydrophobic signal peptide. Cleavage by the signal peptidase releases the 21 kDa mature core protein. The cleavage of the core protein precursor occurs between aminoacids 176 and 188 but the exact cleavage site is not known. Some degraded forms of the core protein appear as well during the course of infection. The other proteins (p7, NS2, NS3, NS4A, NS4B, NS5A and NS5B) are cleaved by the viral proteases. Autoprocessing between NS2 and NS3 is mediated by the NS2 cysteine protease catalytic domain and regulated by the NS3 N-terminal domain. Post-translationally, phosphorylated by host PKC and PKA. Ubiquitinated; mediated by UBE3A and leading to core protein subsequent proteasomal degradation. In terms of processing, highly N-glycosylated. Post-translationally, palmitoylation is required for NS2/3 autoprocessing and E2 recruitment to membranes. Palmitoylated. This modification may play a role in its polymerization or in protein-protein interactions. In terms of processing, phosphorylated on serines in a basal form termed p56. p58 is a hyperphosphorylated form of p56. p56 and p58 coexist in the cell in roughly equivalent amounts. Hyperphosphorylation is dependent on the presence of NS4A. Host CSNK1A1/CKI-alpha or RPS6KB1 kinases may be responsible for NS5A phosphorylation. Post-translationally, tyrosine phosphorylation is essential for the interaction with host SRC. The N-terminus is phosphorylated by host PRK2/PKN2.

It is found in the host endoplasmic reticulum membrane. The protein localises to the host mitochondrion membrane. Its subcellular location is the virion. The protein resides in the host cytoplasm. It localises to the host nucleus. It is found in the host lipid droplet. The protein localises to the virion membrane. Its subcellular location is the host mitochondrion. The protein resides in the host cell membrane. It localises to the host perinuclear region. The enzyme catalyses Hydrolysis of four peptide bonds in the viral precursor polyprotein, commonly with Asp or Glu in the P6 position, Cys or Thr in P1 and Ser or Ala in P1'.. It carries out the reaction a ribonucleoside 5'-triphosphate + H2O = a ribonucleoside 5'-diphosphate + phosphate + H(+). The catalysed reaction is ATP + H2O = ADP + phosphate + H(+). It catalyses the reaction RNA(n) + a ribonucleoside 5'-triphosphate = RNA(n+1) + diphosphate. Its activity is regulated as follows. Inhibited by the antiviral drug hexamethylene amiloride. Inhibition by amantadine appears to be genotype-dependent. Also inhibited by long-alkyl-chain iminosugar derivatives. With respect to regulation, activity is up-regulated by PRK2/PKN2-mediated phosphorylation. In terms of biological role, packages viral RNA to form a viral nucleocapsid, and promotes virion budding. Participates in the viral particle production as a result of its interaction with the non-structural protein 5A. Binds RNA and may function as a RNA chaperone to induce the RNA structural rearrangements taking place during virus replication. Modulates viral translation initiation by interacting with viral IRES and 40S ribosomal subunit. Affects various cell signaling pathways, host immunity and lipid metabolism. Prevents the establishment of cellular antiviral state by blocking the interferon-alpha/beta (IFN-alpha/beta) and IFN-gamma signaling pathways and by blocking the formation of phosphorylated STAT1 and promoting ubiquitin-mediated proteasome-dependent degradation of STAT1. Activates STAT3 leading to cellular transformation. Regulates the activity of cellular genes, including c-myc and c-fos. May repress the promoter of p53, and sequester CREB3 and SP110 isoform 3/Sp110b in the cytoplasm. Represses cell cycle negative regulating factor CDKN1A, thereby interrupting an important check point of normal cell cycle regulation. Targets transcription factors involved in the regulation of inflammatory responses and in the immune response: suppresses TNF-induced NF-kappa-B activation, and activates AP-1. Binds to dendritic cells (DCs) via C1QR1, resulting in down-regulation of T-lymphocytes proliferation. Alters lipid metabolism by interacting with hepatocellular proteins involved in lipid accumulation and storage. Induces up-regulation of FAS promoter activity, and thereby contributes to the increased triglyceride accumulation in hepatocytes (steatosis). Forms a heterodimer with envelope glycoprotein E2, which mediates virus attachment to the host cell, virion internalization through clathrin-dependent endocytosis and fusion with host membrane. Fusion with the host cell is most likely mediated by both E1 and E2, through conformational rearrangements of the heterodimer required for fusion rather than a classical class II fusion mechanism. E1/E2 heterodimer binds host apolipoproteins such as APOB and ApoE thereby forming a lipo-viro-particle (LVP). APOE associated to the LVP allows the initial virus attachment to cell surface receptors such as the heparan sulfate proteoglycans (HSPGs), syndecan-1 (SDC1), syndecan-1 (SDC2), the low-density lipoprotein receptor (LDLR) and scavenger receptor class B type I (SCARB1). The cholesterol transfer activity of SCARB1 allows E2 exposure and binding of E2 to SCARB1 and the tetraspanin CD81. E1/E2 heterodimer binding on CD81 activates the epithelial growth factor receptor (EGFR) signaling pathway. Diffusion of the complex E1-E2-EGFR-SCARB1-CD81 to the cell lateral membrane allows further interaction with Claudin 1 (CLDN1) and occludin (OCLN) to finally trigger HCV entry. Functionally, forms a heterodimer with envelope glycoprotein E1, which mediates virus attachment to the host cell, virion internalization through clathrin-dependent endocytosis and fusion with host membrane. Fusion with the host cell is most likely mediated by both E1 and E2, through conformational rearrangements of the heterodimer required for fusion rather than a classical class II fusion mechanism. The interaction between envelope glycoprotein E2 and host apolipoprotein E/APOE allows the proper assembly, maturation and infectivity of the viral particles. This interaction is probably promoted via the up-regulation of cellular autophagy by the virus. E1/E2 heterodimer binds host apolipoproteins such as APOB and APOE thereby forming a lipo-viro-particle (LVP). APOE associated to the LVP allows the initial virus attachment to cell surface receptors such as the heparan sulfate proteoglycans (HSPGs), syndecan-1 (SDC1), syndecan-1 (SDC2), the low-density lipoprotein receptor (LDLR) and scavenger receptor class B type I (SCARB1). The cholesterol transfer activity of SCARB1 allows E2 exposure and binding of E2 to SCARB1 and the tetraspanin CD81. E1/E2 heterodimer binding on CD81 activates the epithelial growth factor receptor (EGFR) signaling pathway. Diffusion of the complex E1-E2-EGFR-SCARB1-CD81 to the cell lateral membrane allows further interaction with Claudin 1 (CLDN1) and occludin (OCLN) to finally trigger HCV entry. Inhibits host EIF2AK2/PKR activation, preventing the establishment of an antiviral state. Viral ligand for CD209/DC-SIGN and CLEC4M/DC-SIGNR, which are respectively found on dendritic cells (DCs), and on liver sinusoidal endothelial cells and macrophage-like cells of lymph node sinuses. These interactions allow the capture of circulating HCV particles by these cells and subsequent facilitated transmission to permissive cells such as hepatocytes and lymphocyte subpopulations. The interaction between E2 and host amino acid transporter complex formed by SLC3A2 and SLC7A5/LAT1 may facilitate viral entry into host cell. Its function is as follows. Ion channel protein that acts as a viroporin and plays an essential role in the assembly, envelopment and secretion of viral particles. Regulates the host cell secretory pathway, which induces the intracellular retention of viral glycoproteins and favors assembly of viral particles. Creates a pore in acidic organelles and releases Ca(2+) and H(+) in the cytoplasm of infected cells, leading to a productive viral infection. High levels of cytoplasmic Ca(2+) may trigger membrane trafficking and transport of viral ER-associated proteins to viroplasms, sites of viral genome replication. This ionic imbalance induces the assembly of the inflammasome complex, which triggers the maturation of pro-IL-1beta into IL-1beta through the action of caspase-1. Targets also host mitochondria and induces mitochondrial depolarization. In addition of its role as a viroporin, acts as a lipid raft adhesion factor. In terms of biological role, cysteine protease required for the proteolytic auto-cleavage between the non-structural proteins NS2 and NS3. The N-terminus of NS3 is required for the function of NS2 protease (active region NS2-3). Promotes the initiation of viral particle assembly by mediating the interaction between structural and non-structural proteins. Displays three enzymatic activities: serine protease with a chymotrypsin-like fold, NTPase and RNA helicase. NS3 serine protease, in association with NS4A, is responsible for the cleavages of NS3-NS4A, NS4A-NS4B, NS4B-NS5A and NS5A-NS5B. The NS3/NS4A complex prevents phosphorylation of host IRF3, thus preventing the establishment of dsRNA induced antiviral state. The NS3/NS4A complex induces host amino acid transporter component SLC3A2, thus contributing to HCV propagation. NS3 RNA helicase binds to RNA and unwinds both dsDNA and dsRNA in the 3' to 5' direction, and likely resolves RNA complicated stable secondary structures in the template strand. Binds a single ATP and catalyzes the unzipping of a single base pair of dsRNA. Inhibits host antiviral proteins TBK1 and IRF3 thereby preventing the establishment of an antiviral state. Cleaves host MAVS/CARDIF thereby preventing the establishment of an antiviral state. Cleaves host TICAM1/TRIF, thereby disrupting TLR3 signaling and preventing the establishment of an antiviral state. Functionally, induces a specific membrane alteration that serves as a scaffold for the virus replication complex. This membrane alteration gives rise to the so-called ER-derived membranous web that contains the replication complex. NS4B self-interaction contributes to its function in membranous web formation. Promotes host TRIF protein degradation in a CASP8-dependent manner thereby inhibiting host TLR3-mediated interferon signaling. Disrupts the interaction between STING and TBK1 contributing to the inhibition of interferon signaling. Its function is as follows. Phosphorylated protein that is indispensable for viral replication and assembly. Both hypo- and hyperphosphorylated states are required for the viral life cycle. The hyperphosphorylated form of NS5A is an inhibitor of viral replication. Involved in RNA-binding and especially in binding to the viral genome. Zinc is essential for RNA-binding. Participates in the viral particle production as a result of its interaction with the mature viral core protein. Its interaction with host VAPB may target the viral replication complex to vesicles. Down-regulates viral IRES translation initiation. Mediates interferon resistance, presumably by interacting with and inhibiting host EIF2AK2/PKR. Prevents BIN1-induced apoptosis. Acts as a transcriptional activator of some host genes important for viral replication when localized in the nucleus. Via the interaction with host PACSIN2, modulates lipid droplet formation in order to promote virion assembly. Modulates TNFRSF21/DR6 signaling pathway for viral propagation. In terms of biological role, RNA-dependent RNA polymerase that performs primer-template recognition and RNA synthesis during viral replication. Initiates RNA transcription/replication at a flavin adenine dinucleotide (FAD), resulting in a 5'- FAD cap on viral RNAs. In this way, recognition of viral 5' RNA by host pattern recognition receptors can be bypassed, thereby evading activation of antiviral pathways. The sequence is that of Genome polyprotein from Homo sapiens (Human).